We begin with the raw amino-acid sequence, 191 residues long: ATP-dependent dethiobiotin synthetase BioD 2 (191 aa).

13-18 (DVGKTI) provides a ligand contact to ATP. T17 serves as a coordination point for Mg(2+). Residue K38 is part of the active site. T42 contacts substrate. ATP contacts are provided by residues D50 and 115 to 118 (EGAG). 2 residues coordinate Mg(2+): D50 and E115.

Belongs to the dethiobiotin synthetase family. In terms of assembly, homodimer. Mg(2+) serves as cofactor.

It is found in the cytoplasm. The catalysed reaction is (7R,8S)-7,8-diammoniononanoate + CO2 + ATP = (4R,5S)-dethiobiotin + ADP + phosphate + 3 H(+). It functions in the pathway cofactor biosynthesis; biotin biosynthesis; biotin from 7,8-diaminononanoate: step 1/2. Its function is as follows. Catalyzes a mechanistically unusual reaction, the ATP-dependent insertion of CO2 between the N7 and N8 nitrogen atoms of 7,8-diaminopelargonic acid (DAPA, also called 7,8-diammoniononanoate) to form a ureido ring. This chain is ATP-dependent dethiobiotin synthetase BioD 2, found in Haemophilus influenzae (strain ATCC 51907 / DSM 11121 / KW20 / Rd).